A 531-amino-acid chain; its full sequence is Peptide chain release factor 3 (531 aa).

Residues 10-278 (RRRRTFAIIS…SLIEWAPAPK (269 aa)) enclose the tr-type G domain. GTP-binding positions include 19–26 (SHPDAGKT), 87–91 (DTPGH), and 141–144 (NKYD).

Belongs to the TRAFAC class translation factor GTPase superfamily. Classic translation factor GTPase family. PrfC subfamily.

The protein resides in the cytoplasm. In terms of biological role, increases the formation of ribosomal termination complexes and stimulates activities of RF-1 and RF-2. It binds guanine nucleotides and has strong preference for UGA stop codons. It may interact directly with the ribosome. The stimulation of RF-1 and RF-2 is significantly reduced by GTP and GDP, but not by GMP. The sequence is that of Peptide chain release factor 3 from Neisseria meningitidis serogroup A / serotype 4A (strain DSM 15465 / Z2491).